The chain runs to 312 residues: Ribosomal RNA small subunit methyltransferase H (312 aa).

S-adenosyl-L-methionine-binding positions include 34 to 36, aspartate 54, leucine 83, aspartate 99, and glutamine 106; that span reads GGH.

This sequence belongs to the methyltransferase superfamily. RsmH family.

It is found in the cytoplasm. The catalysed reaction is cytidine(1402) in 16S rRNA + S-adenosyl-L-methionine = N(4)-methylcytidine(1402) in 16S rRNA + S-adenosyl-L-homocysteine + H(+). Functionally, specifically methylates the N4 position of cytidine in position 1402 (C1402) of 16S rRNA. The sequence is that of Ribosomal RNA small subunit methyltransferase H from Rubrobacter xylanophilus (strain DSM 9941 / JCM 11954 / NBRC 16129 / PRD-1).